A 695-amino-acid polypeptide reads, in one-letter code: RING finger protein 145 (695 aa).

The next 13 helical transmembrane spans lie at 53–73, 77–97, 123–143, 146–166, 168–188, 225–245, 275–295, 316–336, 340–360, 384–404, 410–430, 460–480, and 482–502; these read YLAL…LTLP, LAKL…HQIS, FITA…VMKT, IWLF…VPIE, IVVI…YFLA, LVVP…QIYT, YSLL…LTLC, TEGV…LQVV, FLLS…MLEI, SLCL…CQFF, LLII…TLFI, LLEF…TVFG, and WTVM…WLRA. The segment at 537 to 575 adopts an RING-type; atypical zinc-finger fold; sequence CSICYQDMNSAVITPCSHFFHPGCLKKWLYVQETCPLCH. Positions 585–603 are enriched in polar residues; sequence ATGESGSSTNPVSEQSATN. Positions 585–610 are disordered; it reads ATGESGSSTNPVSEQSATNPPLGPVS.

The protein resides in the membrane. This is RING finger protein 145 (rnf145) from Xenopus tropicalis (Western clawed frog).